We begin with the raw amino-acid sequence, 213 residues long: MQLKNPILGLCQQSTFMLSAAKVDQCPDDEGFEVAFAGRSNAGKSSALNTLTHASLARTSKTPGRTQLLNFFKLDDDRRLVDLPGYGYAKVPIPLKLHWQRHLEAYLGGRESLKGLILMMDIRHPMTDFDLLMLDWAVASGMPMHILLTKADKLTYGAAKNTLLKVQSEIRKGWGDAITIQLFSAPKRMGLEDAYTALAGWMELADKGAEIAE.

In terms of domain architecture, EngB-type G spans 30–204 (EGFEVAFAGR…YTALAGWMEL (175 aa)). GTP-binding positions include 38–45 (GRSNAGKS), 64–68 (GRTQL), 82–85 (DLPG), 149–152 (TKAD), and 182–185 (LFSA). Positions 45 and 66 each coordinate Mg(2+).

Belongs to the TRAFAC class TrmE-Era-EngA-EngB-Septin-like GTPase superfamily. EngB GTPase family. It depends on Mg(2+) as a cofactor.

In terms of biological role, necessary for normal cell division and for the maintenance of normal septation. The protein is Probable GTP-binding protein EngB of Pseudomonas fluorescens (strain SBW25).